The primary structure comprises 636 residues: Chaperone protein DnaK (636 aa).

T198 bears the Phosphothreonine; by autocatalysis mark. The interval 600–636 is disordered; that stretch reads IAQQQAQAQQGSAEAGAQSQEDDVVDAEFEEVKDDKK. Low complexity predominate over residues 601-618; it reads AQQQAQAQQGSAEAGAQS. Acidic residues predominate over residues 619-636; that stretch reads QEDDVVDAEFEEVKDDKK.

This sequence belongs to the heat shock protein 70 family.

Its function is as follows. Acts as a chaperone. In Vibrio vulnificus (strain CMCP6), this protein is Chaperone protein DnaK.